Consider the following 337-residue polypeptide: Biotin synthase (337 aa).

The 230-residue stretch at 55 to 284 (YFKNTIELCS…KKTILLAGGK (230 aa)) folds into the Radical SAM core domain. [4Fe-4S] cluster contacts are provided by C73, C77, and C80. [2Fe-2S] cluster is bound by residues C117, C149, and C209.

Belongs to the radical SAM superfamily. Biotin synthase family. Homodimer. [4Fe-4S] cluster serves as cofactor. The cofactor is [2Fe-2S] cluster.

It catalyses the reaction (4R,5S)-dethiobiotin + (sulfur carrier)-SH + 2 reduced [2Fe-2S]-[ferredoxin] + 2 S-adenosyl-L-methionine = (sulfur carrier)-H + biotin + 2 5'-deoxyadenosine + 2 L-methionine + 2 oxidized [2Fe-2S]-[ferredoxin]. It participates in cofactor biosynthesis; biotin biosynthesis; biotin from 7,8-diaminononanoate: step 2/2. Its function is as follows. Catalyzes the conversion of dethiobiotin (DTB) to biotin by the insertion of a sulfur atom into dethiobiotin via a radical-based mechanism. The chain is Biotin synthase from Caldicellulosiruptor bescii (strain ATCC BAA-1888 / DSM 6725 / KCTC 15123 / Z-1320) (Anaerocellum thermophilum).